Consider the following 341-residue polypeptide: UDP-3-O-(3-hydroxymyristoyl)glucosamine N-acyltransferase (341 aa).

Histidine 239 serves as the catalytic Proton acceptor.

Belongs to the transferase hexapeptide repeat family. LpxD subfamily. In terms of assembly, homotrimer.

The enzyme catalyses a UDP-3-O-[(3R)-3-hydroxyacyl]-alpha-D-glucosamine + a (3R)-hydroxyacyl-[ACP] = a UDP-2-N,3-O-bis[(3R)-3-hydroxyacyl]-alpha-D-glucosamine + holo-[ACP] + H(+). The catalysed reaction is UDP-3-O-[(3R)-3-hydroxytetradecanoyl]-alpha-D-glucosamine + (3R)-hydroxytetradecanoyl-[ACP] = UDP-2-N,3-O-bis[(3R)-3-hydroxytetradecanoyl]-alpha-D-glucosamine + holo-[ACP] + H(+). Its pathway is glycolipid biosynthesis; lipid IV(A) biosynthesis; lipid IV(A) from (3R)-3-hydroxytetradecanoyl-[acyl-carrier-protein] and UDP-N-acetyl-alpha-D-glucosamine: step 3/6. Its function is as follows. Catalyzes the N-acylation of UDP-3-O-(hydroxytetradecanoyl)glucosamine using 3-hydroxytetradecanoyl-ACP as the acyl donor. Is involved in the biosynthesis of lipid A, a phosphorylated glycolipid that anchors the lipopolysaccharide to the outer membrane of the cell. The sequence is that of UDP-3-O-(3-hydroxymyristoyl)glucosamine N-acyltransferase from Salmonella paratyphi A (strain ATCC 9150 / SARB42).